The chain runs to 282 residues: ATP synthase gamma chain (282 aa).

It belongs to the ATPase gamma chain family. As to quaternary structure, F-type ATPases have 2 components, CF(1) - the catalytic core - and CF(0) - the membrane proton channel. CF(1) has five subunits: alpha(3), beta(3), gamma(1), delta(1), epsilon(1). CF(0) has three main subunits: a, b and c.

The protein resides in the cell membrane. Produces ATP from ADP in the presence of a proton gradient across the membrane. The gamma chain is believed to be important in regulating ATPase activity and the flow of protons through the CF(0) complex. The protein is ATP synthase gamma chain of Clostridium botulinum (strain Okra / Type B1).